The primary structure comprises 310 residues: MRFFRSVDIDFIGNRYKFFTISGLLLLLTVGAFIYRGGLNYGIDFTGGILMRISFQNEVGLQDVRIAVEESGINSFELQSSGNLVMIRIKKDLEAQEEFETLIKSSIQLRFPDNPVKIEGIEYIGPTVGEYLSKQAVYAFLFAFLVMIVYVAFRFKSSLWGIVSVVGIIHDIVISLGFVILANKEINITIVAALLTVVGYSINDTIVLFDRIKENLKLLVKEDFVAVINKSINEVLVRTIVTSLTVFIVACSLFFFGGEVMHTFAYIMIIGTVLGVFSTIFVCAPLICEWRIKTNKRLKIAIKQDGVRSK.

A run of 6 helical transmembrane segments spans residues 18–38, 135–155, 162–182, 188–208, 240–260, and 267–287; these read FFTI…YRGG, QAVY…AFRF, IVSV…VILA, ITIV…TIVL, IVTS…GGEV, and IMII…APLI.

This sequence belongs to the SecD/SecF family. SecF subfamily. Forms a complex with SecD. Part of the essential Sec protein translocation apparatus which comprises SecA, SecYEG and auxiliary proteins SecDF. Other proteins may also be involved.

It is found in the cell inner membrane. Functionally, part of the Sec protein translocase complex. Interacts with the SecYEG preprotein conducting channel. SecDF uses the proton motive force (PMF) to complete protein translocation after the ATP-dependent function of SecA. In Endomicrobium trichonymphae, this protein is Protein translocase subunit SecF.